Consider the following 290-residue polypeptide: MQKHYTVAWFLYSAPGVDPSPPCRSLGWKRKKEWSDESEEEPEKELAPEPEETWVVEMLCGLKMKLKQQRVSPILPEHHKDFNSQLAPGVDPSPPHRSFCWKRKREWWDESEESLEEEPRKVLAPEPEEIWVAEMLCGLKMKLKRRRVSLVLPEHHEAFNRLLEDPVIKRFLAWDKDLRVSDKYLLAMVIAYFSRAGLPSWQYQRIHFFLALYLANDMEEDDEDPKQNIFYFLYGKTRSRIPLIALFQKLRFQFFCSMSGRAWVSREELEEIQAYDPEHWVWARDRARLS.

Residues 16 to 50 (GVDPSPPCRSLGWKRKKEWSDESEEEPEKELAPEP) are disordered. Positions 36 to 50 (DESEEEPEKELAPEP) are enriched in acidic residues.

This sequence belongs to the Speedy/Ringo family.

The chain is Putative speedy protein-like protein 3 from Homo sapiens (Human).